The following is a 463-amino-acid chain: tRNA-2-methylthio-N(6)-dimethylallyladenosine synthase (463 aa).

The 121-residue stretch at 5–125 (RKLHIKSYGC…LPQLLAKAEQ (121 aa)) folds into the MTTase N-terminal domain. Residues Cys14, Cys50, Cys88, Cys166, Cys170, and Cys173 each contribute to the [4Fe-4S] cluster site. Residues 152-384 (RARGISAFVT…QQLIDQQQSA (233 aa)) enclose the Radical SAM core domain. In terms of domain architecture, TRAM spans 387–449 (KAAIGRTVEV…RYSLLGELAS (63 aa)).

It belongs to the methylthiotransferase family. MiaB subfamily. As to quaternary structure, monomer. [4Fe-4S] cluster serves as cofactor.

The protein localises to the cytoplasm. The catalysed reaction is N(6)-dimethylallyladenosine(37) in tRNA + (sulfur carrier)-SH + AH2 + 2 S-adenosyl-L-methionine = 2-methylsulfanyl-N(6)-dimethylallyladenosine(37) in tRNA + (sulfur carrier)-H + 5'-deoxyadenosine + L-methionine + A + S-adenosyl-L-homocysteine + 2 H(+). Its function is as follows. Catalyzes the methylthiolation of N6-(dimethylallyl)adenosine (i(6)A), leading to the formation of 2-methylthio-N6-(dimethylallyl)adenosine (ms(2)i(6)A) at position 37 in tRNAs that read codons beginning with uridine. The polypeptide is tRNA-2-methylthio-N(6)-dimethylallyladenosine synthase (Rhodopseudomonas palustris (strain ATCC BAA-98 / CGA009)).